We begin with the raw amino-acid sequence, 156 residues long: Putative thymidylate kinase (156 aa).

Glycine 7–threonine 14 provides a ligand contact to ATP.

Belongs to the thymidylate kinase family.

It carries out the reaction dTMP + ATP = dTDP + ADP. It functions in the pathway pyrimidine metabolism; dTTP biosynthesis. Functionally, catalyzes the conversion of dTMP to dTDP. This is Putative thymidylate kinase from Acidianus convivator (ABV).